Consider the following 354-residue polypeptide: Dihydroorotate dehydrogenase (quinone) (354 aa).

FMN is bound by residues 61–65 (AGYDK) and alanine 85. Lysine 65 contributes to the substrate binding site. Residue 110–114 (NRFGF) coordinates substrate. Asparagine 139 and asparagine 170 together coordinate FMN. Asparagine 170 contributes to the substrate binding site. Residue serine 173 is the Nucleophile of the active site. Asparagine 175 serves as a coordination point for substrate. Residues lysine 211 and threonine 239 each contribute to the FMN site. Residue 240 to 241 (NT) participates in substrate binding. FMN is bound by residues glycine 261, glycine 290, and 311–312 (YT).

Belongs to the dihydroorotate dehydrogenase family. Type 2 subfamily. Monomer. Requires FMN as cofactor.

The protein localises to the cell membrane. It carries out the reaction (S)-dihydroorotate + a quinone = orotate + a quinol. Its pathway is pyrimidine metabolism; UMP biosynthesis via de novo pathway; orotate from (S)-dihydroorotate (quinone route): step 1/1. Its function is as follows. Catalyzes the conversion of dihydroorotate to orotate with quinone as electron acceptor. This is Dihydroorotate dehydrogenase (quinone) from Cereibacter sphaeroides (strain KD131 / KCTC 12085) (Rhodobacter sphaeroides).